A 1405-amino-acid chain; its full sequence is Xanthine dehydrogenase (1405 aa).

The 2Fe-2S ferredoxin-type domain occupies 17–104; it reads NKLTFYVNGV…GKHLITVEGI (88 aa). The [2Fe-2S] cluster site is built by Cys56, Cys61, Cys64, Cys86, Cys125, Cys128, Cys161, and Cys163. The 187-residue stretch at 288-474 folds into the FAD-binding PCMH-type domain; that stretch reads FGNEQKVWFR…TKIFVPETVP (187 aa). Residues 316-323, Phe397, 407-411, Asp420, Ile464, and Lys483 contribute to the FAD site; these read IVGGASEI and TPAGN. Residues Gln833 and Phe864 each contribute to the Mo-molybdopterin site. Substrate-binding residues include Glu868 and Arg946. Residue Arg978 participates in Mo-molybdopterin binding. Residue Phe980 participates in substrate binding. Ala1147 provides a ligand contact to Mo-molybdopterin. Glu1333 (proton acceptor) is an active-site residue.

The protein belongs to the xanthine dehydrogenase family. Homodimer. Mo-molybdopterin is required as a cofactor. Requires [2Fe-2S] cluster as cofactor. The cofactor is FAD.

Its subcellular location is the cytoplasm. It catalyses the reaction hypoxanthine + NAD(+) + H2O = xanthine + NADH + H(+). The catalysed reaction is xanthine + NAD(+) + H2O = urate + NADH + H(+). The protein operates within purine metabolism. Completely inhibited by allopurinol and significantly inhibited by adenine. Inhibited by Fe(2+), Cd(2+) and Zn(2+) and strongly inhibited by Cu(2+). Mg(2+) and Mo(2+) have no effect on activity. Its function is as follows. Key enzyme in purine degradation. Catalyzes the oxidation of hypoxanthine to xanthine. Catalyzes the oxidation of xanthine to uric acid. Oxidizes xanthine, hypoxanthine and pterine at high rates. Can also act on purine and guanine. The sequence is that of Xanthine dehydrogenase from Blastobotrys adeninivorans (Yeast).